Reading from the N-terminus, the 424-residue chain is Serine--tRNA ligase (424 aa).

L-serine is bound at residue 231–233 (TAE). Residue 262 to 264 (RAE) coordinates ATP. Glu-285 contacts L-serine. An ATP-binding site is contributed by 349 to 352 (EISS). Ser-385 contacts L-serine.

Belongs to the class-II aminoacyl-tRNA synthetase family. Type-1 seryl-tRNA synthetase subfamily. As to quaternary structure, homodimer. The tRNA molecule binds across the dimer.

It is found in the cytoplasm. It carries out the reaction tRNA(Ser) + L-serine + ATP = L-seryl-tRNA(Ser) + AMP + diphosphate + H(+). The catalysed reaction is tRNA(Sec) + L-serine + ATP = L-seryl-tRNA(Sec) + AMP + diphosphate + H(+). Its pathway is aminoacyl-tRNA biosynthesis; selenocysteinyl-tRNA(Sec) biosynthesis; L-seryl-tRNA(Sec) from L-serine and tRNA(Sec): step 1/1. Catalyzes the attachment of serine to tRNA(Ser). Is also able to aminoacylate tRNA(Sec) with serine, to form the misacylated tRNA L-seryl-tRNA(Sec), which will be further converted into selenocysteinyl-tRNA(Sec). The chain is Serine--tRNA ligase from Geobacillus kaustophilus (strain HTA426).